We begin with the raw amino-acid sequence, 80 residues long: ATP synthase F(1) complex subunit delta, mitochondrial (80 aa).

A mitochondrion-targeting transit peptide spans 1–22; the sequence is MLPATLLRXSGLGRVVRQARAY.

The protein belongs to the ATPase epsilon chain family. Component of the ATP synthase complex composed at least of ATP5F1A/subunit alpha, ATP5F1B/subunit beta, ATP5MC1/subunit c (homooctomer), MT-ATP6/subunit a, MT-ATP8/subunit 8, ATP5ME/subunit e, ATP5MF/subunit f, ATP5MG/subunit g, ATP5MK/subunit k, ATP5MJ/subunit j, ATP5F1C/subunit gamma, ATP5F1D/subunit delta, ATP5F1E/subunit epsilon, ATP5PF/subunit F6, ATP5PB/subunit b, ATP5PD/subunit d, ATP5PO/subunit OSCP. ATP synthase complex consists of a soluble F(1) head domain (subunits alpha(3) and beta(3)) - the catalytic core - and a membrane F(0) domain - the membrane proton channel (subunits c, a, 8, e, f, g, k and j). These two domains are linked by a central stalk (subunits gamma, delta, and epsilon) rotating inside the F1 region and a stationary peripheral stalk (subunits F6, b, d, and OSCP). Component of a complex composed at least by ATPIF1, ATP5F1A, ATP5F1B, ATP5F1C AND ATP5F1E.

It localises to the mitochondrion. It is found in the mitochondrion inner membrane. Its function is as follows. Subunit delta, of the mitochondrial membrane ATP synthase complex (F(1)F(0) ATP synthase or Complex V) that produces ATP from ADP in the presence of a proton gradient across the membrane which is generated by electron transport complexes of the respiratory chain. ATP synthase complex consist of a soluble F(1) head domain - the catalytic core - and a membrane F(1) domain - the membrane proton channel. These two domains are linked by a central stalk rotating inside the F(1) region and a stationary peripheral stalk. During catalysis, ATP synthesis in the catalytic domain of F(1) is coupled via a rotary mechanism of the central stalk subunits to proton translocation. In vivo, can only synthesize ATP although its ATP hydrolase activity can be activated artificially in vitro. With the central stalk subunit gamma, is essential for the biogenesis of F(1) catalytic part of the ATP synthase complex namely in the formation of F1 assembly intermediate. This is ATP synthase F(1) complex subunit delta, mitochondrial from Sus scrofa (Pig).